We begin with the raw amino-acid sequence, 523 residues long: GMP synthase [glutamine-hydrolyzing] (523 aa).

The 198-residue stretch at 8–205 (KILILDFGSQ…VVNICGCETK (198 aa)) folds into the Glutamine amidotransferase type-1 domain. Catalysis depends on C85, which acts as the Nucleophile. Catalysis depends on residues H179 and E181. The GMPS ATP-PPase domain occupies 206 to 398 (WTAENIIEDA…LGLPAEMINR (193 aa)). 233 to 239 (SGGVDSS) serves as a coordination point for ATP.

In terms of assembly, homodimer.

It catalyses the reaction XMP + L-glutamine + ATP + H2O = GMP + L-glutamate + AMP + diphosphate + 2 H(+). It functions in the pathway purine metabolism; GMP biosynthesis; GMP from XMP (L-Gln route): step 1/1. Functionally, catalyzes the synthesis of GMP from XMP. This Haemophilus influenzae (strain PittGG) protein is GMP synthase [glutamine-hydrolyzing].